Here is a 32-residue protein sequence, read N- to C-terminus: U3-cyrtautoxin-As1a (32 aa).

Cystine bridges form between Cys-4-Cys-19, Cys-11-Cys-24, and Cys-18-Cys-29.

This sequence belongs to the neurotoxin 14 (magi-1) family. It to aptotoxin III. As to expression, expressed by the venom gland.

Its subcellular location is the secreted. Functionally, is both paralytic and lethal, when injected into lepidopteran larvae. Is a slower acting toxin, being lethal at 24 hours, but not paralytic at 1 hour post-injection. This is U3-cyrtautoxin-As1a from Apomastus schlingeri (Trap-door spider).